The sequence spans 151 residues: U-scoloptoxin(17)-Er2a (151 aa).

The signal sequence occupies residues 1–22 (MKSFFVVFAIVFQATLVALSLA).

Belongs to the scoloptoxin-17 family. Contains 5 disulfide bonds. Expressed by the venom gland.

It is found in the secreted. The sequence is that of U-scoloptoxin(17)-Er2a from Ethmostigmus rubripes (Giant centipede).